An 871-amino-acid chain; its full sequence is Alanine--tRNA ligase (871 aa).

4 residues coordinate Zn(2+): histidine 561, histidine 565, cysteine 662, and histidine 666.

It belongs to the class-II aminoacyl-tRNA synthetase family. Zn(2+) is required as a cofactor.

The protein resides in the cytoplasm. The catalysed reaction is tRNA(Ala) + L-alanine + ATP = L-alanyl-tRNA(Ala) + AMP + diphosphate. Functionally, catalyzes the attachment of alanine to tRNA(Ala) in a two-step reaction: alanine is first activated by ATP to form Ala-AMP and then transferred to the acceptor end of tRNA(Ala). Also edits incorrectly charged Ser-tRNA(Ala) and Gly-tRNA(Ala) via its editing domain. This chain is Alanine--tRNA ligase, found in Dechloromonas aromatica (strain RCB).